We begin with the raw amino-acid sequence, 415 residues long: Small RNA 2'-O-methyltransferase (415 aa).

2 residues coordinate S-adenosyl-L-methionine: S99 and D117. Residues E169, E172, and H173 each coordinate Mg(2+).

It belongs to the methyltransferase superfamily. HEN1 family. The cofactor is Mg(2+).

The protein resides in the cytoplasm. The enzyme catalyses small RNA 3'-end nucleotide + S-adenosyl-L-methionine = small RNA 3'-end 2'-O-methylnucleotide + S-adenosyl-L-homocysteine + H(+). Functionally, methyltransferase that adds a 2'-O-methyl group at the 3'-end of piRNAs, a class of 24 to 30 nucleotide RNAs that are generated by a Dicer-independent mechanism and are primarily derived from transposons and other repeated sequence elements. This probably protects the 3'-end of piRNAs from uridylation activity and subsequent degradation. Stabilization of piRNAs is essential for gametogenesis. The sequence is that of Small RNA 2'-O-methyltransferase from Bombyx mori (Silk moth).